A 206-amino-acid polypeptide reads, in one-letter code: Probable chemoreceptor glutamine deamidase CheD 1 (206 aa).

The protein belongs to the CheD family.

The catalysed reaction is L-glutaminyl-[protein] + H2O = L-glutamyl-[protein] + NH4(+). Probably deamidates glutamine residues to glutamate on methyl-accepting chemotaxis receptors (MCPs), playing an important role in chemotaxis. This Shewanella oneidensis (strain ATCC 700550 / JCM 31522 / CIP 106686 / LMG 19005 / NCIMB 14063 / MR-1) protein is Probable chemoreceptor glutamine deamidase CheD 1.